Consider the following 208-residue polypeptide: UPF0711 protein C18orf21 homolog (208 aa).

The segment covering 123–137 (SKHKSTPGSASKHRT) has biased composition (basic residues). Disordered regions lie at residues 123–180 (SKHK…KSSP) and 189–208 (MLEN…LSSL). A compositionally biased stretch (polar residues) spans 138-152 (PQTVNWATPKSVANR). Positions 153–180 (TPSSTPRSASSNTSSSSSSKSSSVKSSP) are enriched in low complexity.

Belongs to the UPF0711 family.

In Danio rerio (Zebrafish), this protein is UPF0711 protein C18orf21 homolog.